Consider the following 932-residue polypeptide: MAPPQRHPQRSEQVLLLTLLGTLWGAAAAQIRYSIPEELEKGSFVGNIVKDLGLEPQELAEHGVRIVSRGRMQLFSLNPRNGSLVTAGRIDREELCAQSPRCLVSFNILVEDKLNLYPVEVEIVDINDNTPRFLKEELEVKILENAAPSSRFPLMEVYDPDVGMNSLQGFKLSGNSYFSVDVQSEAHGPKYPELVLEGTLDREGEAVYRLVLTAMDGGDPVRSSIAQILVTVLDVNDNTPVFTQPVYRVSVPENLPVGTPVLAVTATDQDEGVHGEVTYSFVKITEKISQIFCLNVLTGEISTSANLDYEDSSFYELGVEARDGPGLRDRAKVLITILDVNDNVPEVVVTSGSRTIAESAPPGTVIALFQVFDRDSGLNGLVTCSIPRSLPFELEKSVGNYYRLVTNAALDREEVFLYNITVTATDKGTPPLSTETIISLNVADTNDNPPTFPHSSYSVYVLENNPRGASIFSVNALDPDVDQNAQVSYSLAEDTLQGAPLSSYVSINSDTGILYALRSFDYEQLRDLQLWVTASDSGDPPLSSNVSLSLFVLDQNDNAPEILYPALPTDGSTGVELAPRSAEPGYLVTKVVAVDRDSGQNAWLSYRLLKASEPGLFSVGLHTGEVRTARALLDRDALKQSLVVAVQDHGQPPLSATVTLTVAVADRIPDILADLGSLEPSAKPNDSDLTLYLVVAVAAVSCVFLAFVIVLLALRLQRWHKSRLLQASGGGLASMPGSHFVGVDGVRAFLQTYSHEVSLTADSRKSHLIFPQPNYADTLINQESYEKSEPLLITQDLLETKGDPRQLQQAPPNTDWRFSQAQRPGTSGSQNGDDTGTWPNNQFDTEMLQAMILASASEAADGSSTLGGGAGTMGLSARYGPQFTLQHVPDYRQNVYIPGSNATLTNAAGKRDGKAPAGGNGNKKKSGKKEKK.

Residues 1 to 29 (MAPPQRHPQRSEQVLLLTLLGTLWGAAAA) form the signal peptide. Cadherin domains follow at residues 30 to 133 (QIRY…TPRF), 134 to 242 (LKEE…TPVF), 243 to 347 (TQPV…VPEV), 348 to 452 (VVTS…PPTF), 453 to 562 (PHSS…APEI), and 570 to 682 (DGST…EPSA). Topologically, residues 30–692 (QIRYSIPEEL…KPNDSDLTLY (663 aa)) are extracellular. A glycan (N-linked (GlcNAc...) asparagine) is linked at N81. N-linked (GlcNAc...) asparagine glycosylation is found at N419 and N545. The N-linked (GlcNAc...) asparagine glycan is linked to N685. A helical membrane pass occupies residues 693–713 (LVVAVAAVSCVFLAFVIVLLA). Residues 714 to 932 (LRLQRWHKSR…KKKSGKKEKK (219 aa)) lie on the Cytoplasmic side of the membrane. Disordered regions lie at residues 803–841 (DPRQLQQAPPNTDWRFSQAQRPGTSGSQNGDDTGTWPNN) and 902–932 (ATLTNAAGKRDGKAPAGGNGNKKKSGKKEKK). Over residues 806–841 (QLQQAPPNTDWRFSQAQRPGTSGSQNGDDTGTWPNN) the composition is skewed to polar residues. Basic residues predominate over residues 922-932 (NKKKSGKKEKK).

It is found in the cell membrane. In terms of biological role, potential calcium-dependent cell-adhesion protein. May be involved in the establishment and maintenance of specific neuronal connections in the brain. This is Protocadherin gamma-A6 (PCDHGA6) from Pan troglodytes (Chimpanzee).